Reading from the N-terminus, the 501-residue chain is Probable leucine aminopeptidase 2 (501 aa).

Residues 1-18 (MVTMKLLYLTSFASLAVA) form the signal peptide. Residues 119 to 216 (SPSVNATAPL…ADGQALIQMI (98 aa)) enclose the PA domain. N-linked (GlcNAc...) asparagine glycans are attached at residues Asn123 and Asn233. The Zn(2+) site is built by His257 and Asp269. The active-site Proton acceptor is the Glu301. Glu302 provides a ligand contact to Zn(2+). Asn316 is a glycosylation site (N-linked (GlcNAc...) asparagine). Asp330 is a Zn(2+) binding site. N-linked (GlcNAc...) asparagine glycosylation occurs at Asn350. His428 serves as a coordination point for Zn(2+). N-linked (GlcNAc...) asparagine glycosylation is found at Asn433 and Asn467. The disordered stretch occupies residues 480–501 (AMKRTPHTHTGGTGCYKDRVEQ).

Belongs to the peptidase M28 family. M28A subfamily. As to quaternary structure, monomer. Zn(2+) is required as a cofactor.

It is found in the secreted. Extracellular aminopeptidase that releases a wide variety of amino acids from natural peptides and contributes to pathogenicity. This Aspergillus fumigatus (strain ATCC MYA-4609 / CBS 101355 / FGSC A1100 / Af293) (Neosartorya fumigata) protein is Probable leucine aminopeptidase 2 (lap2).